The sequence spans 602 residues: DNA mismatch repair protein MutL (602 aa).

This sequence belongs to the DNA mismatch repair MutL/HexB family.

This protein is involved in the repair of mismatches in DNA. It is required for dam-dependent methyl-directed DNA mismatch repair. May act as a 'molecular matchmaker', a protein that promotes the formation of a stable complex between two or more DNA-binding proteins in an ATP-dependent manner without itself being part of a final effector complex. This is DNA mismatch repair protein MutL from Geotalea uraniireducens (strain Rf4) (Geobacter uraniireducens).